The following is a 101-amino-acid chain: Ubiquitin-related modifier 1 (101 aa).

G101 bears the 1-thioglycine mark. A Glycyl lysine isopeptide (Gly-Lys) (interchain with K-? in acceptor proteins) cross-link involves residue G101.

Belongs to the URM1 family. Post-translationally, C-terminal thiocarboxylation occurs in 2 steps, it is first acyl-adenylated (-COAMP) via the hesA/moeB/thiF part of the MOCS3 homolog, then thiocarboxylated (-COSH) via the rhodanese domain of the MOCS3 homolog.

It localises to the cytoplasm. It functions in the pathway tRNA modification; 5-methoxycarbonylmethyl-2-thiouridine-tRNA biosynthesis. Functionally, acts as a sulfur carrier required for 2-thiolation of mcm(5)S(2)U at tRNA wobble positions of cytosolic tRNA(Lys), tRNA(Glu) and tRNA(Gln). Serves as sulfur donor in tRNA 2-thiolation reaction by being thiocarboxylated (-COSH) at its C-terminus by MOCS3. The sulfur is then transferred to tRNA to form 2-thiolation of mcm(5)S(2)U. Also acts as a ubiquitin-like protein (UBL) that is covalently conjugated via an isopeptide bond to lysine residues of target proteins. The thiocarboxylated form serves as substrate for conjugation and oxidative stress specifically induces the formation of UBL-protein conjugates. This Gallus gallus (Chicken) protein is Ubiquitin-related modifier 1.